A 272-amino-acid polypeptide reads, in one-letter code: 3-methyl-2-oxobutanoate hydroxymethyltransferase (272 aa).

2 residues coordinate Mg(2+): Asp51 and Asp90. Residues 51-52, Asp90, and Lys119 each bind 3-methyl-2-oxobutanoate; that span reads DS. Glu121 provides a ligand contact to Mg(2+). Glu188 serves as the catalytic Proton acceptor.

It belongs to the PanB family. In terms of assembly, homodecamer; pentamer of dimers. Requires Mg(2+) as cofactor.

It localises to the cytoplasm. The catalysed reaction is 3-methyl-2-oxobutanoate + (6R)-5,10-methylene-5,6,7,8-tetrahydrofolate + H2O = 2-dehydropantoate + (6S)-5,6,7,8-tetrahydrofolate. It participates in cofactor biosynthesis; (R)-pantothenate biosynthesis; (R)-pantoate from 3-methyl-2-oxobutanoate: step 1/2. In terms of biological role, catalyzes the reversible reaction in which hydroxymethyl group from 5,10-methylenetetrahydrofolate is transferred onto alpha-ketoisovalerate to form ketopantoate. The protein is 3-methyl-2-oxobutanoate hydroxymethyltransferase of Dechloromonas aromatica (strain RCB).